Here is a 155-residue protein sequence, read N- to C-terminus: Glutaredoxin-related protein 5, mitochondrial (155 aa).

Residues 1 to 14 (MNSVFRSTARCLRS) constitute a mitochondrion transit peptide. In terms of domain architecture, Glutaredoxin spans 42-145 (QKNLEEMVKK…EELQKLGIRS (104 aa)). A glutathione-binding site is contributed by Lys59. Cys67 is a [2Fe-2S] cluster binding site. Glutathione contacts are provided by residues 97-101 (RQGIK), Ile109, and 122-123 (CD).

In terms of assembly, homodimer.

The protein resides in the mitochondrion. Monothiol glutaredoxin involved in mitochondrial iron-sulfur (Fe/S) cluster transfer. Receives iron-sulfur clusters from scaffold protein ISCU and mediates their transfer to apoproteins, to the 4Fe/FS cluster biosynthesis machinery, or export from mitochondrion. Required for normal hemoglobin biosynthesis. The polypeptide is Glutaredoxin-related protein 5, mitochondrial (glrx5) (Danio rerio (Zebrafish)).